An 81-amino-acid polypeptide reads, in one-letter code: Neuronatin (81 aa).

Belongs to the neuronatin family.

May participate in the maintenance of segment identity in the hindbrain and pituitary development, and maturation or maintenance of the overall structure of the nervous system. May function as a regulatory subunit of ion channels. This chain is Neuronatin (NNAT), found in Homo sapiens (Human).